The sequence spans 285 residues: UDP-3-O-acyl-N-acetylglucosamine deacetylase (285 aa).

Positions 89, 243, and 247 each coordinate Zn(2+). His-270 functions as the Proton donor in the catalytic mechanism.

Belongs to the LpxC family. Zn(2+) serves as cofactor.

The enzyme catalyses a UDP-3-O-[(3R)-3-hydroxyacyl]-N-acetyl-alpha-D-glucosamine + H2O = a UDP-3-O-[(3R)-3-hydroxyacyl]-alpha-D-glucosamine + acetate. It functions in the pathway glycolipid biosynthesis; lipid IV(A) biosynthesis; lipid IV(A) from (3R)-3-hydroxytetradecanoyl-[acyl-carrier-protein] and UDP-N-acetyl-alpha-D-glucosamine: step 2/6. Catalyzes the hydrolysis of UDP-3-O-myristoyl-N-acetylglucosamine to form UDP-3-O-myristoylglucosamine and acetate, the committed step in lipid A biosynthesis. The sequence is that of UDP-3-O-acyl-N-acetylglucosamine deacetylase from Thermosynechococcus vestitus (strain NIES-2133 / IAM M-273 / BP-1).